The sequence spans 285 residues: Taffazin (285 aa).

Over 1 to 23 (MDSNNSNNNNKNLKQICDIPKPQ) the chain is Mitochondrial intermembrane. An intramembrane segment occupies 24–42 (FLSKGVFTLVGVLCKFWIS). Residues 43–285 (MNTVTTSGID…GRFSHPTIKD (243 aa)) are Mitochondrial intermembrane-facing. The HXXXXD motif motif lies at 74-79 (HSSNLD).

This sequence belongs to the taffazin family.

It is found in the mitochondrion outer membrane. The protein resides in the mitochondrion inner membrane. It carries out the reaction a 1-acyl-sn-glycero-3-phosphate + a 1,2-diacyl-sn-glycero-3-phospho-(1'-sn-glycerol) = 1-acyl-sn-glycero-3-phospho-(1'-sn-glycerol) + a 1,2-diacyl-sn-glycero-3-phosphate. The enzyme catalyses 1-hexadecanoyl-2-(9Z,12Z-octadecadienoyl)-sn-glycero-3-phospho-(1'-sn-glycerol) + 1-(9Z-octadecenoyl)-sn-glycero-3-phosphate = 1-(9Z)-octadecenoyl-2-(9Z,12Z)-octadecadienoyl-sn-glycero-3-phosphate + 1-hexadecanoyl-sn-glycero-3-phospho-(1'-sn-glycerol). It catalyses the reaction 1'-[1,2-diacyl-sn-glycero-3-phospho],3'-[1-acyl-sn-glycero-3-phospho]-glycerol + a 1,2-diacyl-sn-glycero-3-phosphocholine = a cardiolipin + a 1-acyl-sn-glycero-3-phosphocholine. The catalysed reaction is 1-hexadecanoyl-2-(9Z,12Z-octadecadienoyl)-sn-glycero-3-phosphocholine + 1-hexadecanoyl-sn-glycero-3-phosphocholine = 2-(9Z,12Z-octadecadienoyl)-sn-glycero-3-phosphocholine + 1,2-dihexadecanoyl-sn-glycero-3-phosphocholine. It carries out the reaction 1,2-di-(9Z-octadecenoyl)-sn-glycero-3-phosphocholine + 1-hexadecanoyl-sn-glycero-3-phosphocholine = 1-hexadecanoyl-2-(9Z-octadecenoyl)-sn-glycero-3-phosphocholine + 1-(9Z-octadecenoyl)-sn-glycero-3-phosphocholine. It functions in the pathway phospholipid metabolism. Acyltransferase required to remodel newly synthesized phospholipid cardiolipin (1',3'-bis-[1,2-diacyl-sn-glycero-3-phospho]-glycerol or CL), a key component of the mitochondrial inner membrane, with tissue specific acyl chains necessary for adequate mitochondrial function. Its role in cellular physiology is to improve mitochondrial performance. CL is critical for the coassembly of lipids and proteins in mitochondrial membranes, for instance, remodeling of the acyl groups of CL in the mitochondrial inner membrane affects the assembly and stability of respiratory chain complex IV and its supercomplex forms. Catalyzes the transacylation between phospholipids and lysophospholipids, with the highest rate being between phosphatidylcholine (1,2-diacyl-sn-glycero-3-phosphocholine or PC) and CL. Catalyzes both 1-acyl-sn-glycero-3-phosphocholine (lysophosphatidylcholine or LPC) reacylation and PC-CL transacylation, that means, it exchanges acyl groups between CL and PC by a combination of forward and reverse transacylations. Also catalyzes transacylations between other phospholipids such as phosphatidylethanolamine (1,2-diacyl-sn-glycero-3-phosphoethanolamine or PE) and CL, between PC and PE, and between PC and phosphatidate (1,2-diacyl-sn-glycero-3-phosphate or PA), although at lower rate. Not regiospecific, it transfers acyl groups into any of the sn-1 and sn-2 positions of the monolysocardiolipin (MLCL), which is an important prerequisite for uniformity and symmetry in CL acyl distribution. Cannot transacylate dilysocardiolipin (DLCL), thus, the role of MLCL is limited to that of an acyl acceptor. CoA-independent, it can reshuffle molecular species within a single phospholipid class. Redistributes fatty acids between MLCL, CL, and other lipids, which prolongs the half-life of CL. Its action is completely reversible, which allows for cyclic changes, such as fission and fusion or bending and flattening of the membrane. Hence, by contributing to the flexibility of the lipid composition, it plays an important role in the dynamics of mitochondria membranes. In Dictyostelium discoideum (Social amoeba), this protein is Taffazin (taz).